A 269-amino-acid chain; its full sequence is UPF0162 protein bbp_163 (269 aa).

This sequence belongs to the UPF0162 family.

This Buchnera aphidicola subsp. Baizongia pistaciae (strain Bp) protein is UPF0162 protein bbp_163.